We begin with the raw amino-acid sequence, 311 residues long: Dihydroorotate dehydrogenase A (fumarate) (311 aa).

Residues Ser-19 and 43–44 contribute to the FMN site; that span reads KS. Substrate is bound by residues Lys-43, 67 to 71, and Asn-127; that span reads NSMGL. An FMN-binding site is contributed by Asn-127. The active-site Nucleophile is Cys-130. Lys-164 and Val-192 together coordinate FMN. Position 193-194 (193-194) interacts with substrate; sequence NS. Residues Gly-221, 249–250, and 271–272 each bind FMN; these read GG and GT.

This sequence belongs to the dihydroorotate dehydrogenase family. Type 1 subfamily. In terms of assembly, homodimer. The cofactor is FMN.

Its subcellular location is the cytoplasm. It catalyses the reaction (S)-dihydroorotate + fumarate = orotate + succinate. It functions in the pathway pyrimidine metabolism; UMP biosynthesis via de novo pathway. Its function is as follows. Catalyzes the conversion of dihydroorotate to orotate with fumarate as the electron acceptor. This Lactococcus lactis subsp. lactis (strain IL1403) (Streptococcus lactis) protein is Dihydroorotate dehydrogenase A (fumarate) (pyrDA).